The chain runs to 121 residues: MARVKRGVTSHAKHKKTLEAATGFYGRRKNTIRAAKAAVDRSMQYATRDRRVKKRVFRALWIQRLNAAVRELGLTYSRFIDGLAKAGVEIDRKVLSELAISQPEAFKAIVEQAKSALATAG.

This sequence belongs to the bacterial ribosomal protein bL20 family.

Functionally, binds directly to 23S ribosomal RNA and is necessary for the in vitro assembly process of the 50S ribosomal subunit. It is not involved in the protein synthesizing functions of that subunit. This is Large ribosomal subunit protein bL20 from Beijerinckia indica subsp. indica (strain ATCC 9039 / DSM 1715 / NCIMB 8712).